An 83-amino-acid polypeptide reads, in one-letter code: Large ribosomal subunit protein bL27 (83 aa).

Belongs to the bacterial ribosomal protein bL27 family.

This is Large ribosomal subunit protein bL27 from Bifidobacterium adolescentis (strain ATCC 15703 / DSM 20083 / NCTC 11814 / E194a).